A 777-amino-acid polypeptide reads, in one-letter code: Translation initiation factor IF-2 (777 aa).

Disordered regions lie at residues 30–54 and 98–117; these read SPSMGATIVKKRRRKTHDTEEQDEN and EDSNEKTNDRDSATNTSFKE. Residues 98–109 show a composition bias toward basic and acidic residues; sequence EDSNEKTNDRDS. A tr-type G domain is found at 279-449; that stretch reads PKPPIVTFMG…LLIAELMKLE (171 aa). Positions 288-295 are G1; the sequence is GHVDHGKT. 288–295 contributes to the GTP binding site; sequence GHVDHGKT. Residues 313–317 are G2; the sequence is GITQH. Residues 334 to 337 form a G3 region; that stretch reads DTPG. Residues 334 to 338 and 388 to 391 contribute to the GTP site; these read DTPGH and NKID. The segment at 388-391 is G4; that stretch reads NKID. Positions 425–427 are G5; sequence SAK.

This sequence belongs to the TRAFAC class translation factor GTPase superfamily. Classic translation factor GTPase family. IF-2 subfamily.

It is found in the cytoplasm. One of the essential components for the initiation of protein synthesis. Protects formylmethionyl-tRNA from spontaneous hydrolysis and promotes its binding to the 30S ribosomal subunits. Also involved in the hydrolysis of GTP during the formation of the 70S ribosomal complex. The polypeptide is Translation initiation factor IF-2 (Wolbachia sp. subsp. Brugia malayi (strain TRS)).